Reading from the N-terminus, the 307-residue chain is Small ribosomal subunit biogenesis GTPase RsgA (307 aa).

Positions 85–242 (RQDAWKTKLI…LIDSPGLQEF (158 aa)) constitute a CP-type G domain. GTP is bound by residues 135–138 (NKAD) and 184–192 (GQSGMGKST). C266, C271, H273, and C279 together coordinate Zn(2+).

It belongs to the TRAFAC class YlqF/YawG GTPase family. RsgA subfamily. As to quaternary structure, monomer. Associates with 30S ribosomal subunit, binds 16S rRNA. The cofactor is Zn(2+).

Its subcellular location is the cytoplasm. Functionally, one of several proteins that assist in the late maturation steps of the functional core of the 30S ribosomal subunit. Helps release RbfA from mature subunits. May play a role in the assembly of ribosomal proteins into the subunit. Circularly permuted GTPase that catalyzes slow GTP hydrolysis, GTPase activity is stimulated by the 30S ribosomal subunit. This Neisseria meningitidis serogroup C (strain 053442) protein is Small ribosomal subunit biogenesis GTPase RsgA.